The following is a 347-amino-acid chain: tRNA N6-adenosine threonylcarbamoyltransferase (347 aa).

Residues His-117 and His-121 each contribute to the Fe cation site. Residues 140–144 (LVSGG), Asp-174, Gly-187, Asp-191, and Asn-281 each bind substrate. Asp-309 is a Fe cation binding site.

It belongs to the KAE1 / TsaD family. It depends on Fe(2+) as a cofactor.

Its subcellular location is the cytoplasm. It catalyses the reaction L-threonylcarbamoyladenylate + adenosine(37) in tRNA = N(6)-L-threonylcarbamoyladenosine(37) in tRNA + AMP + H(+). Required for the formation of a threonylcarbamoyl group on adenosine at position 37 (t(6)A37) in tRNAs that read codons beginning with adenine. Is involved in the transfer of the threonylcarbamoyl moiety of threonylcarbamoyl-AMP (TC-AMP) to the N6 group of A37, together with TsaE and TsaB. TsaD likely plays a direct catalytic role in this reaction. This Thermobifida fusca (strain YX) protein is tRNA N6-adenosine threonylcarbamoyltransferase.